A 363-amino-acid chain; its full sequence is Fructose-bisphosphate aldolase C (363 aa).

Y5 carries the phosphotyrosine modification. S36, S39, and S45 each carry phosphoserine. R56 is a binding site for substrate. An N6-acetyllysine modification is found at K111. K147 is a binding site for substrate. The active-site Proton acceptor is E188. K230 (schiff-base intermediate with dihydroxyacetone-P) is an active-site residue.

This sequence belongs to the class I fructose-bisphosphate aldolase family. As to quaternary structure, homotetramer. Interacts with ATP6V1E1. In terms of tissue distribution, high expression in the adult brain.

The catalysed reaction is beta-D-fructose 1,6-bisphosphate = D-glyceraldehyde 3-phosphate + dihydroxyacetone phosphate. It participates in carbohydrate degradation; glycolysis; D-glyceraldehyde 3-phosphate and glycerone phosphate from D-glucose: step 4/4. The protein is Fructose-bisphosphate aldolase C (Aldoc) of Rattus norvegicus (Rat).